The following is a 142-amino-acid chain: uncharacterized protein (142 aa).

This is an uncharacterized protein from Caenorhabditis elegans.